Here is a 70-residue protein sequence, read N- to C-terminus: Melittin (70 aa).

An N-terminal signal peptide occupies residues 1–21 (MKFLVNVALVFMVVYISFIYA). Residues 22–43 (APEPEPAPEAEAEADAEADPEA) constitute a propeptide, removed by a dipeptidylpeptidase. Glycine 44 is subject to N-formylglycine; partial. The residue at position 69 (glutamine 69) is a Glutamine amide.

This sequence belongs to the melittin family. Monomer (in solution and for integration into membranes), homotetramer (in solution and potentially as a toroidal pore in membranes), and potenially homomultimer (as a toroidal pore in membranes). In terms of tissue distribution, expressed by the venom gland.

The protein localises to the secreted. It is found in the target cell membrane. Its function is as follows. Main toxin of bee venom with strong hemolytic activity and antimicrobial activity. It has enhancing effects on bee venom phospholipase A2 activity. This amphipathic toxin binds to negatively charged membrane surface and forms pore by inserting into lipid bilayers inducing the leakage of ions and molecules and the enhancement of permeability that ultimately leads to cell lysis. It acts as a voltage-gated pore with higher selectivity for anions over cations. The ion conductance has been shown to be voltage-dependent. Self-association of melittin in membranes is promoted by high ionic strength, but not by the presence of negatively charged lipids. In vivo, intradermal injection into healthy human volunteers produce sharp pain sensation and an inflammatory response. It produces pain by activating primary nociceptor cells directly and indirectly due to its ability to activate plasma membrane phospholipase A2 and its pore-forming activity. In Polistes hebraeus (Paper wasp), this protein is Melittin (MELT).